Here is a 389-residue protein sequence, read N- to C-terminus: 8-amino-7-oxononanoate synthase (389 aa).

Arg19 serves as a coordination point for substrate. A pyridoxal 5'-phosphate-binding site is contributed by 106-107; that stretch reads GY. Substrate is bound at residue His131. Positions 176, 204, and 233 each coordinate pyridoxal 5'-phosphate. Lys236 is subject to N6-(pyridoxal phosphate)lysine. Thr350 lines the substrate pocket.

The protein belongs to the class-II pyridoxal-phosphate-dependent aminotransferase family. BioF subfamily. In terms of assembly, homodimer. Pyridoxal 5'-phosphate is required as a cofactor.

It catalyses the reaction 6-carboxyhexanoyl-[ACP] + L-alanine + H(+) = (8S)-8-amino-7-oxononanoate + holo-[ACP] + CO2. Its pathway is cofactor biosynthesis; biotin biosynthesis. Catalyzes the decarboxylative condensation of pimeloyl-[acyl-carrier protein] and L-alanine to produce 8-amino-7-oxononanoate (AON), [acyl-carrier protein], and carbon dioxide. The sequence is that of 8-amino-7-oxononanoate synthase from Ectopseudomonas mendocina (strain ymp) (Pseudomonas mendocina).